The sequence spans 205 residues: FMN reductase (NADH) RutF (205 aa).

The interval 171–205 (PRAPRSGSAPAEPARAARALGARPAEGPALALRSA) is disordered.

It belongs to the non-flavoprotein flavin reductase family. RutF subfamily.

It carries out the reaction FMNH2 + NAD(+) = FMN + NADH + 2 H(+). Functionally, catalyzes the reduction of FMN to FMNH2 which is used to reduce pyrimidine by RutA via the Rut pathway. The chain is FMN reductase (NADH) RutF from Methylorubrum extorquens (strain DSM 6343 / CIP 106787 / DM4) (Methylobacterium extorquens).